We begin with the raw amino-acid sequence, 129 residues long: Small ribosomal subunit protein uS11 (129 aa).

Belongs to the universal ribosomal protein uS11 family. As to quaternary structure, part of the 30S ribosomal subunit.

Located on the platform of the 30S subunit. The protein is Small ribosomal subunit protein uS11 of Methanocaldococcus jannaschii (strain ATCC 43067 / DSM 2661 / JAL-1 / JCM 10045 / NBRC 100440) (Methanococcus jannaschii).